A 917-amino-acid chain; its full sequence is Hexokinase-2 (917 aa).

The residue at position 1 (M1) is an N-acetylmethionine. Residues 1-16 are mitochondrial-binding peptide (MBP); it reads MIASHMIACLFTELNQ. Hexokinase domains are found at residues 16–458 and 464–906; these read QNQV…MVTA and ADQH…LITA. Residues R30 and 84 to 89 each bind ATP; that span reads DLGGTN. The interval 73 to 207 is hexokinase small subdomain 1; that stretch reads DGTEHGEFLA…DFDIDIVAVV (135 aa). 84–88 contributes to the D-glucose 6-phosphate binding site; it reads DLGGT. D-glucose contacts are provided by residues 155 to 156, 172 to 173, and 208 to 209; these read SF, TK, and ND. The interval 208–447 is hexokinase large subdomain 1; the sequence is NDTVGTMMTC…CDVRFLRSED (240 aa). D-glucose 6-phosphate is bound by residues D209 and T232. Residues N235, E260, and 291–294 each bind D-glucose; that span reads QLFE. Residue 413–415 participates in D-glucose 6-phosphate binding; it reads DGS. Residue 425-426 coordinates ATP; that stretch reads KR. Residues S449 and 532–536 contribute to the D-glucose 6-phosphate site; that span reads DLGGT. Positions 521–655 are hexokinase small subdomain 2; the sequence is DGTEKGDFLA…EFDLDVVAVV (135 aa). ATP is bound at residue 532–537; it reads DLGGTN. D-glucose contacts are provided by residues 603–604, 620–621, and 656–657; these read SF, TK, and ND. Residues 656–895 form a hexokinase large subdomain 2 region; that stretch reads NDTVGTMMTC…CDVSFLESED (240 aa). Residues D657 and T680 each contribute to the D-glucose 6-phosphate site. T680 is an ATP binding site. D-glucose contacts are provided by residues 682–683, E708, and 739–742; these read SN and QRFE. ATP is bound by residues 747–748, 784–788, and 863–867; these read GM, TKFLS, and TLYKL. D-glucose 6-phosphate contacts are provided by residues 861–863 and S897; that span reads DGT.

It belongs to the hexokinase family. In terms of assembly, monomer. Interacts with TIGAR; the interaction increases hexokinase activity in a hypoxia- and HIF1A-dependent manner.

It localises to the mitochondrion outer membrane. The protein resides in the cytoplasm. Its subcellular location is the cytosol. It carries out the reaction a D-hexose + ATP = a D-hexose 6-phosphate + ADP + H(+). The catalysed reaction is D-fructose + ATP = D-fructose 6-phosphate + ADP + H(+). The enzyme catalyses D-glucose + ATP = D-glucose 6-phosphate + ADP + H(+). It participates in carbohydrate metabolism; hexose metabolism. It functions in the pathway carbohydrate degradation; glycolysis; D-glyceraldehyde 3-phosphate and glycerone phosphate from D-glucose: step 1/4. With respect to regulation, hexokinase activity is specifically inhibited by 2,6-disubstituted glucosamines. In terms of biological role, catalyzes the phosphorylation of hexose, such as D-glucose and D-fructose, to hexose 6-phosphate (D-glucose 6-phosphate and D-fructose 6-phosphate, respectively). Mediates the initial step of glycolysis by catalyzing phosphorylation of D-glucose to D-glucose 6-phosphate. Plays a key role in maintaining the integrity of the outer mitochondrial membrane by preventing the release of apoptogenic molecules from the intermembrane space and subsequent apoptosis. In Rattus norvegicus (Rat), this protein is Hexokinase-2.